The chain runs to 116 residues: MINIYDSANKLAEDLTQTDQYKALADAVKVVQEDAESAALFKKMDELQTKIMQSQQTGQPLSEEDQQAYKDLNDQVQNNKQIVSLLQTEQSLYELLNDIQKTYSKPINDLYEDLRK.

It belongs to the UPF0342 family.

In Lactobacillus acidophilus (strain ATCC 700396 / NCK56 / N2 / NCFM), this protein is UPF0342 protein LBA1592.